The following is a 293-amino-acid chain: DegV domain-containing protein MG326 homolog (293 aa).

In terms of domain architecture, DegV spans Thr3–Leu289. Hexadecanoate-binding residues include Thr62 and Ser94.

Functionally, may bind long-chain fatty acids, such as palmitate, and may play a role in lipid transport or fatty acid metabolism. This chain is DegV domain-containing protein MG326 homolog, found in Mycoplasma pneumoniae (strain ATCC 29342 / M129 / Subtype 1) (Mycoplasmoides pneumoniae).